The following is a 327-amino-acid chain: uncharacterized protein (327 aa).

The S4 RNA-binding domain maps to 32–105 (VRLDKWLAEQ…IPLDILYEDE (74 aa)). The active site involves Asp-156.

This sequence belongs to the pseudouridine synthase RluA family.

It carries out the reaction a uridine in RNA = a pseudouridine in RNA. This is an uncharacterized protein from Synechocystis sp. (strain ATCC 27184 / PCC 6803 / Kazusa).